Consider the following 304-residue polypeptide: MAATLRELRGRIRSAGSIKKITKAQELIATSRIARAQARLESARPYADQITQMLTTLAADAALDHPLLVEHPQPKRAGVLVVSSDRGLCGAYNANVFRRSEELFSLLRDEGKQPVLYVVGRKALAYYTFRNWDIAQSWTGFSEQPKYENAAEIASTLVDAFMLGAGEGEDQQTNNEQSVDELHIVFTEFKSMLSQSTEARRMAPMVVEYVEETGPRTLYSFEPDATTLFESLLPRYLTTRVYAAMLESAASELASRQRAMKSATDNADDLIKALTLMANRERQAQITQEISEIVGGANALADAR.

Belongs to the ATPase gamma chain family. In terms of assembly, F-type ATPases have 2 components, CF(1) - the catalytic core - and CF(0) - the membrane proton channel. CF(1) has five subunits: alpha(3), beta(3), gamma(1), delta(1), epsilon(1). CF(0) has three main subunits: a, b and c.

Its subcellular location is the cell membrane. Its function is as follows. Produces ATP from ADP in the presence of a proton gradient across the membrane. The gamma chain is believed to be important in regulating ATPase activity and the flow of protons through the CF(0) complex. This Mycobacterium marinum (strain ATCC BAA-535 / M) protein is ATP synthase gamma chain.